The chain runs to 725 residues: Ribosomal RNA large subunit methyltransferase K/L (725 aa).

Residues valine 46–leucine 157 enclose the THUMP domain. The interval threonine 393 to alanine 412 is disordered. The span at glutamate 395–glutamine 404 shows a compositional bias: basic and acidic residues.

This sequence belongs to the methyltransferase superfamily. RlmKL family.

It is found in the cytoplasm. The catalysed reaction is guanosine(2445) in 23S rRNA + S-adenosyl-L-methionine = N(2)-methylguanosine(2445) in 23S rRNA + S-adenosyl-L-homocysteine + H(+). The enzyme catalyses guanosine(2069) in 23S rRNA + S-adenosyl-L-methionine = N(2)-methylguanosine(2069) in 23S rRNA + S-adenosyl-L-homocysteine + H(+). In terms of biological role, specifically methylates the guanine in position 2445 (m2G2445) and the guanine in position 2069 (m7G2069) of 23S rRNA. The sequence is that of Ribosomal RNA large subunit methyltransferase K/L from Pseudomonas paraeruginosa (strain DSM 24068 / PA7) (Pseudomonas aeruginosa (strain PA7)).